A 261-amino-acid polypeptide reads, in one-letter code: 5'-nucleotidase SurE (261 aa).

Positions 8, 9, 43, and 96 each coordinate a divalent metal cation.

This sequence belongs to the SurE nucleotidase family. It depends on a divalent metal cation as a cofactor.

The protein localises to the cytoplasm. It carries out the reaction a ribonucleoside 5'-phosphate + H2O = a ribonucleoside + phosphate. In terms of biological role, nucleotidase that shows phosphatase activity on nucleoside 5'-monophosphates. The sequence is that of 5'-nucleotidase SurE from Cereibacter sphaeroides (strain ATCC 17025 / ATH 2.4.3) (Rhodobacter sphaeroides).